The following is a 476-amino-acid chain: Eukaryotic translation initiation factor 3 subunit L (476 aa).

The 196-residue stretch at 257–452 (DAIRMFSHIL…DLDYALEKDL (196 aa)) folds into the PCI domain.

It belongs to the eIF-3 subunit L family. In terms of assembly, component of the eukaryotic translation initiation factor 3 (eIF-3) complex.

It is found in the cytoplasm. In terms of biological role, component of the eukaryotic translation initiation factor 3 (eIF-3) complex, which is involved in protein synthesis of a specialized repertoire of mRNAs and, together with other initiation factors, stimulates binding of mRNA and methionyl-tRNAi to the 40S ribosome. The eIF-3 complex specifically targets and initiates translation of a subset of mRNAs involved in cell proliferation. The chain is Eukaryotic translation initiation factor 3 subunit L from Aspergillus terreus (strain NIH 2624 / FGSC A1156).